We begin with the raw amino-acid sequence, 390 residues long: Chorismate synthase 2 (390 aa).

Arg-39 and Arg-45 together coordinate NADP(+). Residues 132–134 (RSS), 253–254 (NA), Gly-298, 313–317 (KPIPT), and Arg-339 contribute to the FMN site.

The protein belongs to the chorismate synthase family. In terms of assembly, homotetramer. FMNH2 is required as a cofactor.

The catalysed reaction is 5-O-(1-carboxyvinyl)-3-phosphoshikimate = chorismate + phosphate. It functions in the pathway metabolic intermediate biosynthesis; chorismate biosynthesis; chorismate from D-erythrose 4-phosphate and phosphoenolpyruvate: step 7/7. In terms of biological role, catalyzes the anti-1,4-elimination of the C-3 phosphate and the C-6 proR hydrogen from 5-enolpyruvylshikimate-3-phosphate (EPSP) to yield chorismate, which is the branch point compound that serves as the starting substrate for the three terminal pathways of aromatic amino acid biosynthesis. This reaction introduces a second double bond into the aromatic ring system. This Bacillus cereus (strain ATCC 10987 / NRS 248) protein is Chorismate synthase 2.